Reading from the N-terminus, the 453-residue chain is Jacalin-related lectin 40 (453 aa).

Jacalin-type lectin domains are found at residues 1-142 (MAQK…YFTT), 154-296 (HIKL…YFSS), and 306-449 (PEKL…YVVP). A2 is modified (N-acetylalanine).

This sequence belongs to the jacalin lectin family. Expressed in roots.

This chain is Jacalin-related lectin 40 (JAL40), found in Arabidopsis thaliana (Mouse-ear cress).